Reading from the N-terminus, the 361-residue chain is Outer mitochondrial transmembrane helix translocase (361 aa).

Topologically, residues 1 to 15 (MVHAEAFSRPLSRNE) are mitochondrial intermembrane. Residues 16 to 32 (VVGLIFRLTIFGAVTYF) traverse the membrane as a helical segment. The Cytoplasmic segment spans residues 33–361 (TIKWMVDAID…QNVLTHVCLD (329 aa)). 133–140 (GPPGCGKT) is a binding site for ATP. Serine 322 is modified (phosphoserine).

This sequence belongs to the AAA ATPase family. MSP1 subfamily. Interacts with GRIA2 and GRIP1 in an ATP-dependent manner. ATAD1-catalyzed ATP hydrolysis disrupts not only its binding to GRIA2 and GRIP1, but also interaction between GRIP1 and GRIA2, leading to AMPAR complex disassembly.

The protein resides in the mitochondrion outer membrane. Its subcellular location is the peroxisome membrane. The protein localises to the postsynaptic cell membrane. It carries out the reaction [protein]-with a C-terminal TM segment(out) + ATP + H2O = [protein]-with a C-terminal TM segment(in) + ADP + phosphate + H(+). In terms of biological role, outer mitochondrial translocase required to remove mislocalized tail-anchored transmembrane proteins on mitochondria. Specifically recognizes and binds tail-anchored transmembrane proteins: acts as a dislocase that mediates the ATP-dependent extraction of mistargeted tail-anchored transmembrane proteins from the mitochondrion outer membrane. Also plays a critical role in regulating the surface expression of AMPA receptors (AMPAR), thereby regulating synaptic plasticity and learning and memory. Required for NMDA-stimulated AMPAR internalization and inhibition of GRIA1 and GRIA2 recycling back to the plasma membrane; these activities are ATPase-dependent. The protein is Outer mitochondrial transmembrane helix translocase of Homo sapiens (Human).